Consider the following 123-residue polypeptide: Small ribosomal subunit protein uS12 (123 aa).

Positions 1 to 21 (MPTIEQLVRKGRQAKPKKSKT) are disordered. Basic residues predominate over residues 9–20 (RKGRQAKPKKSK). D89 carries the 3-methylthioaspartic acid modification.

This sequence belongs to the universal ribosomal protein uS12 family. In terms of assembly, part of the 30S ribosomal subunit. Contacts proteins S8 and S17. May interact with IF1 in the 30S initiation complex.

In terms of biological role, with S4 and S5 plays an important role in translational accuracy. Interacts with and stabilizes bases of the 16S rRNA that are involved in tRNA selection in the A site and with the mRNA backbone. Located at the interface of the 30S and 50S subunits, it traverses the body of the 30S subunit contacting proteins on the other side and probably holding the rRNA structure together. The combined cluster of proteins S8, S12 and S17 appears to hold together the shoulder and platform of the 30S subunit. This Bifidobacterium longum subsp. infantis (strain ATCC 15697 / DSM 20088 / JCM 1222 / NCTC 11817 / S12) protein is Small ribosomal subunit protein uS12.